The primary structure comprises 160 residues: Lipoprotein signal peptidase (160 aa).

3 helical membrane-spanning segments follow: residues 5–25 (LVFFVSTACGILADQLSKFII), 60–80 (IEWLIAASVLGVILAMTAFFI), and 84–104 (LPFLDTRPGLIALGVILAGTV). Catalysis depends on residues D118 and D132. Residues 128–148 (FNIADSCLTVGVIGLLLLYIV) form a helical membrane-spanning segment.

It belongs to the peptidase A8 family.

It is found in the cell membrane. It carries out the reaction Release of signal peptides from bacterial membrane prolipoproteins. Hydrolyzes -Xaa-Yaa-Zaa-|-(S,diacylglyceryl)Cys-, in which Xaa is hydrophobic (preferably Leu), and Yaa (Ala or Ser) and Zaa (Gly or Ala) have small, neutral side chains.. It participates in protein modification; lipoprotein biosynthesis (signal peptide cleavage). Its function is as follows. This protein specifically catalyzes the removal of signal peptides from prolipoproteins. In Dehalococcoides mccartyi (strain ATCC BAA-2100 / JCM 16839 / KCTC 5957 / BAV1), this protein is Lipoprotein signal peptidase.